Reading from the N-terminus, the 311-residue chain is Ribosomal RNA small subunit methyltransferase H (311 aa).

S-adenosyl-L-methionine-binding positions include 32 to 34 (AGH), D52, F79, D100, and Q107.

The protein belongs to the methyltransferase superfamily. RsmH family.

The protein resides in the cytoplasm. The catalysed reaction is cytidine(1402) in 16S rRNA + S-adenosyl-L-methionine = N(4)-methylcytidine(1402) in 16S rRNA + S-adenosyl-L-homocysteine + H(+). Its function is as follows. Specifically methylates the N4 position of cytidine in position 1402 (C1402) of 16S rRNA. The sequence is that of Ribosomal RNA small subunit methyltransferase H from Staphylococcus aureus (strain bovine RF122 / ET3-1).